The chain runs to 255 residues: 1-(5-phosphoribosyl)-5-[(5-phosphoribosylamino)methylideneamino] imidazole-4-carboxamide isomerase (255 aa).

The active-site Proton acceptor is D8. The active-site Proton donor is the D129.

Belongs to the HisA/HisF family.

The protein resides in the cytoplasm. The enzyme catalyses 1-(5-phospho-beta-D-ribosyl)-5-[(5-phospho-beta-D-ribosylamino)methylideneamino]imidazole-4-carboxamide = 5-[(5-phospho-1-deoxy-D-ribulos-1-ylimino)methylamino]-1-(5-phospho-beta-D-ribosyl)imidazole-4-carboxamide. It functions in the pathway amino-acid biosynthesis; L-histidine biosynthesis; L-histidine from 5-phospho-alpha-D-ribose 1-diphosphate: step 4/9. In Synechococcus sp. (strain CC9902), this protein is 1-(5-phosphoribosyl)-5-[(5-phosphoribosylamino)methylideneamino] imidazole-4-carboxamide isomerase.